A 141-amino-acid polypeptide reads, in one-letter code: ATP synthase epsilon chain (141 aa).

This sequence belongs to the ATPase epsilon chain family. In terms of assembly, F-type ATPases have 2 components, CF(1) - the catalytic core - and CF(0) - the membrane proton channel. CF(1) has five subunits: alpha(3), beta(3), gamma(1), delta(1), epsilon(1). CF(0) has three main subunits: a, b and c.

The protein resides in the cell inner membrane. In terms of biological role, produces ATP from ADP in the presence of a proton gradient across the membrane. This chain is ATP synthase epsilon chain, found in Pseudomonas savastanoi pv. phaseolicola (strain 1448A / Race 6) (Pseudomonas syringae pv. phaseolicola (strain 1448A / Race 6)).